A 541-amino-acid chain; its full sequence is Chaperonin GroEL 2 (541 aa).

ATP is bound by residues 29–32 (TLGP), 86–90 (DGTTT), Gly-413, 476–478 (NAA), and Asp-492.

Belongs to the chaperonin (HSP60) family. Forms a cylinder of 14 subunits composed of two heptameric rings stacked back-to-back. Interacts with the co-chaperonin GroES.

The protein resides in the secreted. It localises to the capsule. Its subcellular location is the cell surface. The protein localises to the cell wall. It carries out the reaction ATP + H2O + a folded polypeptide = ADP + phosphate + an unfolded polypeptide.. Functionally, together with its co-chaperonin GroES, plays an essential role in assisting protein folding. The GroEL-GroES system forms a nano-cage that allows encapsulation of the non-native substrate proteins and provides a physical environment optimized to promote and accelerate protein folding. The chain is Chaperonin GroEL 2 from Mycobacterium ulcerans (strain Agy99).